Reading from the N-terminus, the 329-residue chain is DNA-directed RNA polymerase subunit alpha (329 aa).

Positions 1-234 (MQGSVTEFLK…EQLDAFVELR (234 aa)) are alpha N-terminal domain (alpha-NTD). Residues 248 to 329 (FDPILLRPVD…WPPASLIDND (82 aa)) form an alpha C-terminal domain (alpha-CTD) region.

It belongs to the RNA polymerase alpha chain family. As to quaternary structure, homodimer. The RNAP catalytic core consists of 2 alpha, 1 beta, 1 beta' and 1 omega subunit. When a sigma factor is associated with the core the holoenzyme is formed, which can initiate transcription.

The enzyme catalyses RNA(n) + a ribonucleoside 5'-triphosphate = RNA(n+1) + diphosphate. Its function is as follows. DNA-dependent RNA polymerase catalyzes the transcription of DNA into RNA using the four ribonucleoside triphosphates as substrates. The chain is DNA-directed RNA polymerase subunit alpha from Idiomarina loihiensis (strain ATCC BAA-735 / DSM 15497 / L2-TR).